Here is a 288-residue protein sequence, read N- to C-terminus: Eukaryotic translation initiation factor 3 subunit G (288 aa).

Disordered regions lie at residues 1–33 and 156–197; these read MSKLGNRADWADDEEFDDPSALPPQQITTNKDG and DEPT…GGER. Positions 208–286 constitute an RRM domain; it reads ATLRVTNVSE…LILRVEFAKR (79 aa).

It belongs to the eIF-3 subunit G family. In terms of assembly, component of the eukaryotic translation initiation factor 3 (eIF-3) complex.

The protein localises to the cytoplasm. Functionally, RNA-binding component of the eukaryotic translation initiation factor 3 (eIF-3) complex, which is involved in protein synthesis of a specialized repertoire of mRNAs and, together with other initiation factors, stimulates binding of mRNA and methionyl-tRNAi to the 40S ribosome. The eIF-3 complex specifically targets and initiates translation of a subset of mRNAs involved in cell proliferation. This subunit can bind 18S rRNA. This Aspergillus niger (strain ATCC MYA-4892 / CBS 513.88 / FGSC A1513) protein is Eukaryotic translation initiation factor 3 subunit G (tif35).